A 130-amino-acid polypeptide reads, in one-letter code: Probable pilin MJ0835.1 (130 aa).

Residues 1–14 constitute a propeptide that is removed on maturation; the sequence is MNTMENKIIKSKKA. A QXSXEXXXL motif is present at residues 15-23; the sequence is QVSLEFSFL.

The N-terminus is cleaved by the prepilin peptidase EppA, which recognizes the class III signal sequence.

Its subcellular location is the secreted. The protein resides in the cell surface. It is found in the fimbrium. The polypeptide is Probable pilin MJ0835.1 (Methanocaldococcus jannaschii (strain ATCC 43067 / DSM 2661 / JAL-1 / JCM 10045 / NBRC 100440) (Methanococcus jannaschii)).